Here is a 137-residue protein sequence, read N- to C-terminus: Small ribosomal subunit protein uS12 (137 aa).

Disordered regions lie at residues 1–21 (MPTINQLVRKPRKSKVEKSDS) and 34–57 (VHTKLAAPQKRGVATRVGTMTPKK).

The protein belongs to the universal ribosomal protein uS12 family. In terms of assembly, part of the 30S ribosomal subunit. Contacts proteins S8 and S17. May interact with IF1 in the 30S initiation complex.

Its function is as follows. With S4 and S5 plays an important role in translational accuracy. In terms of biological role, interacts with and stabilizes bases of the 16S rRNA that are involved in tRNA selection in the A site and with the mRNA backbone. Located at the interface of the 30S and 50S subunits, it traverses the body of the 30S subunit contacting proteins on the other side and probably holding the rRNA structure together. The combined cluster of proteins S8, S12 and S17 appears to hold together the shoulder and platform of the 30S subunit. This Streptococcus mutans serotype c (strain ATCC 700610 / UA159) protein is Small ribosomal subunit protein uS12.